The primary structure comprises 117 residues: Putative membrane protein insertion efficiency factor (117 aa).

Residues 87-117 are disordered; the sequence is RKGGPSAAEPAIEGHIPSSPAAETPSHVQGA.

Belongs to the UPF0161 family.

The protein resides in the cell membrane. In terms of biological role, could be involved in insertion of integral membrane proteins into the membrane. In Streptomyces avermitilis (strain ATCC 31267 / DSM 46492 / JCM 5070 / NBRC 14893 / NCIMB 12804 / NRRL 8165 / MA-4680), this protein is Putative membrane protein insertion efficiency factor.